Here is a 373-residue protein sequence, read N- to C-terminus: Enoyl-[acyl-carrier-protein] reductase, mitochondrial (373 aa).

The N-terminal 53 residues, 1–53, are a transit peptide targeting the mitochondrion; sequence MLVSQRVTGARARAPQLAGLLEAWYRHGRTTSSYSALSEPSRVRALVYGNHGD. Position 61 is an N6-acetyllysine; alternate (Lys61). An N6-succinyllysine; alternate modification is found at Lys61. Tyr94 acts as the Proton donor in catalysis. Residues Asn167, 193–196, and 216–218 each bind NADP(+); these read NSGV and RDR. Residues Lys252 and Lys267 each carry the N6-acetyllysine; alternate modification. Residues Lys252 and Lys267 each carry the N6-succinyllysine; alternate modification. NADP(+)-binding positions include 285–288 and 310–312; these read YGGM and FWL. The residue at position 316 (Lys316) is an N6-succinyllysine. Lys368 contributes to the NADP(+) binding site.

This sequence belongs to the zinc-containing alcohol dehydrogenase family. Quinone oxidoreductase subfamily. As to quaternary structure, homodimer. In terms of tissue distribution, expressed in Purkinje cells (at protein level).

The protein localises to the mitochondrion. It catalyses the reaction a 2,3-saturated acyl-[ACP] + NADP(+) = a (2E)-enoyl-[ACP] + NADPH + H(+). It carries out the reaction (2E)-butenoyl-[ACP] + NADPH + H(+) = butanoyl-[ACP] + NADP(+). The enzyme catalyses (2E)-hexenoyl-[ACP] + NADPH + H(+) = hexanoyl-[ACP] + NADP(+). The catalysed reaction is (2E)-octenoyl-[ACP] + NADPH + H(+) = octanoyl-[ACP] + NADP(+). It catalyses the reaction (2E)-decenoyl-[ACP] + NADPH + H(+) = decanoyl-[ACP] + NADP(+). It carries out the reaction (2E)-dodecenoyl-[ACP] + NADPH + H(+) = dodecanoyl-[ACP] + NADP(+). The enzyme catalyses (2E)-tetradecenoyl-[ACP] + NADPH + H(+) = tetradecanoyl-[ACP] + NADP(+). The catalysed reaction is (2E)-hexadecenoyl-[ACP] + NADPH + H(+) = hexadecanoyl-[ACP] + NADP(+). Its function is as follows. Catalyzes the NADPH-dependent reduction of trans-2-enoyl thioesters in mitochondrial fatty acid synthesis (fatty acid synthesis type II). Fatty acid chain elongation in mitochondria uses acyl carrier protein (ACP) as an acyl group carrier, but the enzyme accepts both ACP and CoA thioesters as substrates in vitro. Displays a preference for medium-chain over short- and long-chain substrates. May provide the octanoyl chain used for lipoic acid biosynthesis, regulating protein lipoylation and mitochondrial respiratory activity particularly in Purkinje cells. Involved in iron homeostasis; affecting Fe-S cluster assembly and ceramide metabolism. Required for proper morphology and bioenergetic functions of mitochondria. Required for maintenance of neurons. This chain is Enoyl-[acyl-carrier-protein] reductase, mitochondrial (Mecr), found in Mus musculus (Mouse).